The primary structure comprises 467 residues: 3-isopropylmalate dehydratase large subunit (467 aa).

Positions 347, 407, and 410 each coordinate [4Fe-4S] cluster.

Belongs to the aconitase/IPM isomerase family. LeuC type 1 subfamily. In terms of assembly, heterodimer of LeuC and LeuD. [4Fe-4S] cluster serves as cofactor.

It catalyses the reaction (2R,3S)-3-isopropylmalate = (2S)-2-isopropylmalate. It participates in amino-acid biosynthesis; L-leucine biosynthesis; L-leucine from 3-methyl-2-oxobutanoate: step 2/4. In terms of biological role, catalyzes the isomerization between 2-isopropylmalate and 3-isopropylmalate, via the formation of 2-isopropylmaleate. The sequence is that of 3-isopropylmalate dehydratase large subunit from Synechococcus sp. (strain JA-2-3B'a(2-13)) (Cyanobacteria bacterium Yellowstone B-Prime).